Reading from the N-terminus, the 101-residue chain is MDPQNSFLLQPRVPTAAPTSGGVSWSRVGEVAILSFVGLICFYLLYLWVLRDLILVLKARQGRSTEELIFGIQAVDRSNPIPNTQAPPSQGNPGPFVPGTG.

A disordered region spans residues 1-22; the sequence is MDPQNSFLLQPRVPTAAPTSGG. A helical transmembrane segment spans residues 30–50; that stretch reads EVAILSFVGLICFYLLYLWVL. The tract at residues 79–101 is disordered; that stretch reads NPIPNTQAPPSQGNPGPFVPGTG. A compositionally biased stretch (polar residues) spans 80–92; the sequence is PIPNTQAPPSQGN.

Belongs to the mastrevirus movement protein family. Interacts with the capsid protein (CP). Part of a MP-CP-viral DNA complex.

Its subcellular location is the host membrane. In terms of biological role, involved in the viral transport within, and between cells. This Avena sativa (Oat) protein is Movement protein.